A 1462-amino-acid chain; its full sequence is NK-tumor recognition protein (1462 aa).

A PPIase cyclophilin-type domain is found at His10–Val175. Disordered regions lie at residues Lys187 to Gln591 and Val607 to Lys627. The segment covering Ser198 to Glu213 has biased composition (low complexity). Residues Ser221–Lys240 are compositionally biased toward basic residues. 2 stretches are compositionally biased toward basic and acidic residues: residues Glu241–Asn250 and Gly258–Glu286. Residue Lys323 forms a Glycyl lysine isopeptide (Lys-Gly) (interchain with G-Cter in SUMO2) linkage. A compositionally biased stretch (basic residues) spans Ser329–Pro345. Ser379, Ser401, and Ser416 each carry phosphoserine. Residues Lys382–Leu402 show a composition bias toward basic and acidic residues. Positions Ser403–Ala421 are enriched in polar residues. Over residues His423–Ile459 the composition is skewed to basic residues. Residues Ser463 and Ser471 each carry the phosphoserine modification. A compositionally biased stretch (basic and acidic residues) spans Lys497–Val507. The segment covering His524–Ser542 has biased composition (low complexity). The segment covering Ser543–Arg568 has biased composition (basic residues). Residues Lys578 and Lys581 each participate in a glycyl lysine isopeptide (Lys-Gly) (interchain with G-Cter in SUMO2) cross-link. At Ser613 the chain carries Phosphoserine. Residue Lys639 forms a Glycyl lysine isopeptide (Lys-Gly) (interchain with G-Cter in SUMO2) linkage. Ser648 bears the Phosphoserine mark. Glycyl lysine isopeptide (Lys-Gly) (interchain with G-Cter in SUMO2) cross-links involve residues Lys656 and Lys666. The interval Thr658–Thr1072 is disordered. Low complexity-rich tracts occupy residues Ser699–Arg725 and Ser736–Ser749. Over residues Arg754 to Ser774 the composition is skewed to basic residues. A compositionally biased stretch (basic and acidic residues) spans Ser775–Glu800. The segment covering Ser801–Ser815 has biased composition (low complexity). Basic and acidic residues-rich tracts occupy residues Gln823 to Arg870 and Trp885 to Lys909. A phosphoserine mark is found at Ser866, Ser887, Ser889, Ser891, and Ser907. The span at Glu910–Val922 shows a compositional bias: acidic residues. Polar residues predominate over residues Thr932 to Asn969. Residues Glu988–Ala1013 are compositionally biased toward basic residues. Residues Phe1022–Asp1031 are compositionally biased toward acidic residues. Over residues Asp1032 to Thr1072 the composition is skewed to basic and acidic residues. Lys1057 participates in a covalent cross-link: Glycyl lysine isopeptide (Lys-Gly) (interchain with G-Cter in SUMO2). Ser1077 and Ser1146 each carry phosphoserine. The disordered stretch occupies residues Met1129–Pro1156. Thr1155 is modified (phosphothreonine). Lys1163 is covalently cross-linked (Glycyl lysine isopeptide (Lys-Gly) (interchain with G-Cter in SUMO2)). Residues Glu1169 to Glu1215 form a disordered region. A Glycyl lysine isopeptide (Lys-Gly) (interchain with G-Cter in SUMO1); alternate cross-link involves residue Lys1177. Lys1177 is covalently cross-linked (Glycyl lysine isopeptide (Lys-Gly) (interchain with G-Cter in SUMO2); alternate). Ser1203 carries the phosphoserine modification. Glycyl lysine isopeptide (Lys-Gly) (interchain with G-Cter in SUMO2) cross-links involve residues Lys1216, Lys1225, and Lys1258. Positions Leu1251–Ser1462 are disordered. Residues Ser1311–Tyr1348 are arg/Ser tandem repeat-rich. Composition is skewed to low complexity over residues Ser1331–Arg1351 and Arg1359–Ser1376. Residues Tyr1377–Ser1388 are compositionally biased toward basic residues. The span at Arg1389–Arg1410 shows a compositional bias: low complexity. Residues Arg1425 to Ser1435 are compositionally biased toward basic residues.

Its subcellular location is the cell membrane. It catalyses the reaction [protein]-peptidylproline (omega=180) = [protein]-peptidylproline (omega=0). Its activity is regulated as follows. Inhibited by cyclosporin A (CsA). Functionally, PPIase that catalyzes the cis-trans isomerization of proline imidic peptide bonds in oligopeptides and may therefore assist protein folding. Component of a putative tumor-recognition complex involved in the function of NK cells. The protein is NK-tumor recognition protein of Homo sapiens (Human).